We begin with the raw amino-acid sequence, 192 residues long: MITITDAAQAHFAKLLANQEPNTQIRVFVINPGTPNAECGVSYCPPDAVEPNDTEIKFEKLSAYVDDISAPFLEDAEIDFVTDQLGSQLTLKAPNAKMRKVADDAPLIERVEYVLQSQINPQLASHGGRVSLMEITEDGYAILQFGGGCNGCSMIDVTLKDGIEKELLNLFPEELKGVKDLTEHQRGDHSYY.

2 residues coordinate [4Fe-4S] cluster: cysteine 149 and cysteine 152.

This sequence belongs to the NfuA family. In terms of assembly, homodimer. [4Fe-4S] cluster is required as a cofactor.

In terms of biological role, involved in iron-sulfur cluster biogenesis. Binds a 4Fe-4S cluster, can transfer this cluster to apoproteins, and thereby intervenes in the maturation of Fe/S proteins. Could also act as a scaffold/chaperone for damaged Fe/S proteins. This Proteus mirabilis (strain HI4320) protein is Fe/S biogenesis protein NfuA.